The chain runs to 563 residues: Membrane protein insertase YidC (563 aa).

A helical membrane pass occupies residues 6-26 (TILWMIFSFSLLLLWNNWQIH). Residues 36-68 (PPASSAASPAEGQQAAANGQAATPSVPTTPAAA) are disordered. 4 helical membrane-spanning segments follow: residues 373–393 (WGWAIVALTVIIKAVFFPLAA), 443–463 (LPMVVQIPVFIALYWVLLASV), 482–502 (PYFILPAVMMATMFLQIKLNP), and 512–532 (VMMIMPLVFGGMMFFFPAGLV).

This sequence belongs to the OXA1/ALB3/YidC family. Type 1 subfamily. In terms of assembly, interacts with the Sec translocase complex via SecD. Specifically interacts with transmembrane segments of nascent integral membrane proteins during membrane integration.

It is found in the cell inner membrane. In terms of biological role, required for the insertion and/or proper folding and/or complex formation of integral membrane proteins into the membrane. Involved in integration of membrane proteins that insert both dependently and independently of the Sec translocase complex, as well as at least some lipoproteins. Aids folding of multispanning membrane proteins. The polypeptide is Membrane protein insertase YidC (Bordetella petrii (strain ATCC BAA-461 / DSM 12804 / CCUG 43448)).